The chain runs to 373 residues: AA9 family lytic polysaccharide monooxygenase A (373 aa).

A signal peptide spans 1 to 20 (MKSSTFGMLALAAAAKLVSA). Position 21 (H21) interacts with Cu(2+). The tract at residues 36–55 (EGNSQSGYIRSPPSNSPITD) is disordered. A disulfide bond links C63 and C183. H102 is a binding site for Cu(2+). O2 is bound by residues H169 and Q178. Y180 is a binding site for Cu(2+). The disordered stretch occupies residues 234-333 (GASGSSSSSS…NSVPQPSSNA (100 aa)). Low complexity-rich tracts occupy residues 235–262 (ASGS…APSS) and 270–323 (PATS…AAPT). Residues 324–333 (NSVPQPSSNA) show a composition bias toward polar residues. Residues 335–371 (GAVKEWYQCGGLNYSGSTQCEEGLTCKKWNPYYHQCV) form the CBM1 domain. Residue N347 is glycosylated (N-linked (GlcNAc...) asparagine).

Belongs to the polysaccharide monooxygenase AA9 family. The cofactor is Cu(2+).

It localises to the secreted. The catalysed reaction is [(1-&gt;4)-beta-D-glucosyl]n+m + reduced acceptor + O2 = 4-dehydro-beta-D-glucosyl-[(1-&gt;4)-beta-D-glucosyl]n-1 + [(1-&gt;4)-beta-D-glucosyl]m + acceptor + H2O.. Functionally, lytic polysaccharide monooxygenase (LPMO) that depolymerizes crystalline and amorphous polysaccharides via the oxidation of scissile alpha- or beta-(1-4)-glycosidic bonds, yielding exclusively C4 oxidation products. Catalysis by LPMOs requires the reduction of the active-site copper from Cu(II) to Cu(I) by a reducing agent and H(2)O(2) or O(2) as a cosubstrate. In addition to cellulose, also cleaves the beta-(1!4)-glucan backbone of tamarind xyloglucan, but only next to unsubstituted glucosyl units. This is AA9 family lytic polysaccharide monooxygenase A from Aspergillus tamarii.